Consider the following 569-residue polypeptide: Anti-Muellerian hormone type-2 receptor (569 aa).

A signal peptide spans 1–17 (MLGTLGLWALLPAAVQA). At 18-148 (PPNRRTCVFF…AAPGESPWMA (131 aa)) the chain is on the extracellular side. Intrachain disulfides connect cysteine 55-cysteine 79 and cysteine 92-cysteine 109. An N-linked (GlcNAc...) asparagine glycan is attached at asparagine 66. Residue asparagine 119 is glycosylated (N-linked (GlcNAc...) asparagine). Residues 149-169 (LALLGLVLLLLLLLGGIVVAL) traverse the membrane as a helical segment. At 170–569 (LQRKAYRVQS…PGAACASSDV (400 aa)) the chain is on the cytoplasmic side. One can recognise a Protein kinase domain in the interval 201 to 511 (LCFSQVIREG…RLVALVHPQE (311 aa)). ATP contacts are provided by residues 207-215 (IREGGHAAV) and lysine 228. Catalysis depends on aspartate 331, which acts as the Proton acceptor. A disordered region spans residues 512-535 (AQPCPEGRPHSHPEDWPPAPAPAP).

It belongs to the protein kinase superfamily. TKL Ser/Thr protein kinase family. TGFB receptor subfamily. Interacts with type I receptor ACVR1. Mg(2+) is required as a cofactor. The cofactor is Mn(2+).

Its subcellular location is the membrane. The catalysed reaction is L-threonyl-[receptor-protein] + ATP = O-phospho-L-threonyl-[receptor-protein] + ADP + H(+). It carries out the reaction L-seryl-[receptor-protein] + ATP = O-phospho-L-seryl-[receptor-protein] + ADP + H(+). Functionally, on ligand binding, forms a receptor complex consisting of two type II and two type I transmembrane serine/threonine kinases. Type II receptors phosphorylate and activate type I receptors which autophosphorylate, then bind and activate SMAD transcriptional regulators. Receptor for anti-Muellerian hormone. The sequence is that of Anti-Muellerian hormone type-2 receptor (AMHR2) from Oryctolagus cuniculus (Rabbit).